The following is a 323-amino-acid chain: Chitin-binding lectin 1 (323 aa).

The signal sequence occupies residues 1–22 (MKETAISVLALLTLFLLEVVSA). 4-hydroxyproline is present on residues Pro-50, Pro-51, Pro-53, and Pro-55. O-linked (Ara...) hydroxyproline glycans are attached at residues Pro-50, Pro-51, Pro-53, and Pro-55. Chitin-binding type-1 domains are found at residues 58-101 (YPQC…QCPG) and 105-149 (EGRC…QCKL). 8 disulfides stabilise this stretch: Cys-61–Cys-77, Cys-70–Cys-83, Cys-76–Cys-90, Cys-95–Cys-99, Cys-108–Cys-125, Cys-117–Cys-131, Cys-124–Cys-138, and Cys-143–Cys-147. The chitin site is built by Ser-78, Trp-80, Trp-82, and Tyr-89. An extensin-like region spans residues 150-210 (PSPPPPPPPP…PPPPPPALPY (61 aa)). The O-linked (Gal) serine glycan is linked to Ser-151. Tandem repeats lie at residues 151–159 (SPPPPPPPP), 160–164 (SPPPP), 165–167 (SPP), 168–172 (SPPPP), 173–180 (SPPPPPPP), 181–185 (SPPPP), 186–190 (SPPPP), 191–192 (SP), 193–198 (SPPPPP), and 200–206 (SPPPPPP). Residues 151–206 (SPPPPPPPPSPPPPSPPSPPPPSPPPPPPPSPPPPSPPPPSPSPPPPPASPPPPPP) form a 10 X approximate repeats of S-P-P-P-P region. A 4-hydroxyproline mark is found at Pro-152, Pro-153, Pro-154, Pro-155, Pro-156, Pro-157, Pro-158, and Pro-159. Pro-152, Pro-153, Pro-154, Pro-155, Pro-156, Pro-157, Pro-158, and Pro-159 each carry an O-linked (Ara...) hydroxyproline glycan. The tract at residues 154–203 (PPPPPPSPPPPSPPSPPPPSPPPPPPPSPPPPSPPPPSPSPPPPPASPPP) is disordered. A glycan (O-linked (Gal) serine) is linked at Ser-160. 4-hydroxyproline occurs at positions 161, 162, 163, and 164. Residues Pro-161, Pro-162, Pro-163, and Pro-164 are each glycosylated (O-linked (Ara...) hydroxyproline). The O-linked (Gal) serine glycan is linked to Ser-165. 4-hydroxyproline is present on residues Pro-166 and Pro-167. 2 O-linked (Ara...) hydroxyproline glycosylation sites follow: Pro-166 and Pro-167. Residue Ser-168 is glycosylated (O-linked (Gal) serine). 4 positions are modified to 4-hydroxyproline: Pro-169, Pro-170, Pro-171, and Pro-172. Pro-169, Pro-170, Pro-171, and Pro-172 each carry an O-linked (Ara...) hydroxyproline glycan. An O-linked (Gal) serine glycan is attached at Ser-173. 4-hydroxyproline occurs at positions 174, 175, 176, 177, 178, 179, and 180. Residues Pro-174, Pro-175, Pro-176, Pro-177, Pro-178, Pro-179, and Pro-180 are each glycosylated (O-linked (Ara...) hydroxyproline). O-linked (Gal) serine glycosylation is present at Ser-181. 4-hydroxyproline is present on residues Pro-182, Pro-183, Pro-184, and Pro-185. Residues Pro-182, Pro-183, Pro-184, and Pro-185 are each glycosylated (O-linked (Ara...) hydroxyproline). A glycan (O-linked (Gal) serine) is linked at Ser-186. Residues Pro-187, Pro-188, Pro-189, and Pro-190 each carry the 4-hydroxyproline modification. Residues Pro-187, Pro-188, Pro-189, and Pro-190 are each glycosylated (O-linked (Ara...) hydroxyproline). O-linked (Gal) serine glycosylation occurs at Ser-191. Pro-192 carries the post-translational modification 4-hydroxyproline. An O-linked (Ara...) hydroxyproline glycan is attached at Pro-192. O-linked (Gal) serine glycosylation occurs at Ser-193. 5 positions are modified to 4-hydroxyproline: Pro-194, Pro-195, Pro-196, Pro-197, and Pro-198. Residues Pro-194, Pro-195, Pro-196, Pro-197, and Pro-198 are each glycosylated (O-linked (Ara...) hydroxyproline). The O-linked (Gal) serine glycan is linked to Ser-200. 4-hydroxyproline occurs at positions 201, 202, 203, 204, 205, 206, and 209. O-linked (Ara...) hydroxyproline glycans are attached at residues Pro-201, Pro-202, Pro-203, Pro-204, Pro-205, Pro-206, and Pro-209. Chitin-binding type-1 domains lie at 210–253 (YPQC…QCPG) and 257–301 (EGRC…QCNT). Disulfide bonds link Cys-213-Cys-229, Cys-222-Cys-235, Cys-228-Cys-242, Cys-247-Cys-251, Cys-260-Cys-277, Cys-269-Cys-283, Cys-276-Cys-290, and Cys-295-Cys-299. Chitin-binding residues include Ser-230, Trp-232, Trp-234, and Tyr-241.

This sequence in the central section; belongs to the extensin family. In terms of assembly, homodimer. Heavily glycosylated with beta-arabinose on hydroxyprolines and with alpha-galactose on serines of the extensin-like domain. As no other sugars could be detected in the native lectin, it is unlikely that the three putative N-glycosylation sites are actually glycosylated. Post-translationally, the N-terminus is blocked. The N-terminal sequences proposed in PubMed:9022287 and PubMed:11056399 originate probably from truncated proteins.

In terms of biological role, this protein might function as a defense against chitin containing pathogens. Binds to several branched or linear N-acetyllactosamine-containing glycosphingolipids and also to lactosylceramide with sphingosine and non-hydroxy fatty acids. The protein is Chitin-binding lectin 1 of Solanum tuberosum (Potato).